A 128-amino-acid chain; its full sequence is Small ribosomal subunit protein uS12 (128 aa).

D89 is modified (3-methylthioaspartic acid). The disordered stretch occupies residues 101-128 (SLDTSGVADRRQGRSKYGAKRPKGAAAK). Positions 113–128 (GRSKYGAKRPKGAAAK) are enriched in basic residues.

Belongs to the universal ribosomal protein uS12 family. Part of the 30S ribosomal subunit. Contacts proteins S8 and S17. May interact with IF1 in the 30S initiation complex.

With S4 and S5 plays an important role in translational accuracy. Functionally, interacts with and stabilizes bases of the 16S rRNA that are involved in tRNA selection in the A site and with the mRNA backbone. Located at the interface of the 30S and 50S subunits, it traverses the body of the 30S subunit contacting proteins on the other side and probably holding the rRNA structure together. The combined cluster of proteins S8, S12 and S17 appears to hold together the shoulder and platform of the 30S subunit. This is Small ribosomal subunit protein uS12 from Prosthecochloris aestuarii (strain DSM 271 / SK 413).